Reading from the N-terminus, the 466-residue chain is Ribulose bisphosphate carboxylase large chain (466 aa).

N6,N6,N6-trimethyllysine is present on lysine 5. 2 residues coordinate substrate: asparagine 114 and threonine 164. Catalysis depends on lysine 166, which acts as the Proton acceptor. Lysine 168 is a binding site for substrate. Mg(2+) contacts are provided by lysine 192, aspartate 194, and glutamate 195. Position 192 is an N6-carboxylysine (lysine 192). Histidine 285 functions as the Proton acceptor in the catalytic mechanism. Residues arginine 286, histidine 318, and serine 370 each coordinate substrate.

The protein belongs to the RuBisCO large chain family. Type I subfamily. In terms of assembly, heterohexadecamer of 8 large chains and 8 small chains; disulfide-linked. The disulfide link is formed within the large subunit homodimers. Requires Mg(2+) as cofactor. The disulfide bond which can form in the large chain dimeric partners within the hexadecamer appears to be associated with oxidative stress and protein turnover.

The protein resides in the plastid. Its subcellular location is the chloroplast. It catalyses the reaction 2 (2R)-3-phosphoglycerate + 2 H(+) = D-ribulose 1,5-bisphosphate + CO2 + H2O. The enzyme catalyses D-ribulose 1,5-bisphosphate + O2 = 2-phosphoglycolate + (2R)-3-phosphoglycerate + 2 H(+). Its function is as follows. RuBisCO catalyzes two reactions: the carboxylation of D-ribulose 1,5-bisphosphate, the primary event in carbon dioxide fixation, as well as the oxidative fragmentation of the pentose substrate in the photorespiration process. Both reactions occur simultaneously and in competition at the same active site. In Gonopterodendron arboreum (Maracaibo lignum-vitae), this protein is Ribulose bisphosphate carboxylase large chain.